A 377-amino-acid polypeptide reads, in one-letter code: Methylthioribose-1-phosphate isomerase (377 aa).

Asp-254 serves as the catalytic Proton donor.

The protein belongs to the eIF-2B alpha/beta/delta subunits family. MtnA subfamily.

The protein localises to the cytoplasm. The protein resides in the nucleus. The catalysed reaction is 5-(methylsulfanyl)-alpha-D-ribose 1-phosphate = 5-(methylsulfanyl)-D-ribulose 1-phosphate. The protein operates within amino-acid biosynthesis; L-methionine biosynthesis via salvage pathway; L-methionine from S-methyl-5-thio-alpha-D-ribose 1-phosphate: step 1/6. Catalyzes the interconversion of methylthioribose-1-phosphate (MTR-1-P) into methylthioribulose-1-phosphate (MTRu-1-P). The protein is Methylthioribose-1-phosphate isomerase (mri1) of Aspergillus terreus (strain NIH 2624 / FGSC A1156).